A 379-amino-acid chain; its full sequence is Protein OSCP1 (379 aa).

As to expression, predominantly expressed in testis.

The protein localises to the basal cell membrane. In terms of biological role, may be involved in drug clearance in the placenta. In Mus musculus (Mouse), this protein is Protein OSCP1 (Oscp1).